Consider the following 432-residue polypeptide: Tryptophan--tRNA ligase, cytoplasmic (432 aa).

The short motif at 111–120 (PSSDSMHLGH) is the 'HIGH' region element. Positions 295–299 (KMSAS) match the 'KMSKS' region motif.

It belongs to the class-I aminoacyl-tRNA synthetase family. Homodimer.

Its subcellular location is the cytoplasm. The catalysed reaction is tRNA(Trp) + L-tryptophan + ATP = L-tryptophyl-tRNA(Trp) + AMP + diphosphate + H(+). The chain is Tryptophan--tRNA ligase, cytoplasmic (WRS1) from Saccharomyces cerevisiae (strain ATCC 204508 / S288c) (Baker's yeast).